The following is a 289-amino-acid chain: Serine/threonine-protein phosphatase Pgam5, mitochondrial (289 aa).

Residues 7-23 (FACGTGAGLLTFYLTKL) form a helical membrane-spanning segment.

Belongs to the phosphoglycerate mutase family. BPG-dependent PGAM subfamily. In terms of assembly, interacts with Pk92B/ASK1.

The protein resides in the mitochondrion outer membrane. It catalyses the reaction O-phospho-L-seryl-[protein] + H2O = L-seryl-[protein] + phosphate. It carries out the reaction O-phospho-L-threonyl-[protein] + H2O = L-threonyl-[protein] + phosphate. Displays phosphatase activity for serine/threonine residues, and dephosphorylates and activates Pk92B kinase. Has apparently no phosphoglycerate mutase activity. This chain is Serine/threonine-protein phosphatase Pgam5, mitochondrial, found in Drosophila persimilis (Fruit fly).